Here is a 325-residue protein sequence, read N- to C-terminus: MSDDIHGDIHLPVLLERCIELLAPALQEPGAVIVDATLGMGGHSAGILARFPQATLVGLDRDPDALAIAGERLARFGDRVHLVHTVYDGIREALDGLGIAEVQGVLFDLGVSSLQLDRVERGFSYSKDAPLDMRMDGTSDLTAERVLAEYPEADLRRIFRDYGEEKLAARYAQRIVAARQQGPITRSGELVHLLQRATPAAIARQGHPAKRVFQALRIEVNQELAVLERALPAAVDALAVGGRLVVESYQSLEDRIVKRELQTRSRSSAPAGLPVELPEHRPELRLLIRGAELADDDEKAANPRAAPVRLRAAERTRASEDRRGS.

S-adenosyl-L-methionine contacts are provided by residues 41–43 (GGH), aspartate 60, tyrosine 87, aspartate 108, and glutamine 115. Residues 295 to 325 (DDDEKAANPRAAPVRLRAAERTRASEDRRGS) are disordered. The span at 311–325 (RAAERTRASEDRRGS) shows a compositional bias: basic and acidic residues.

It belongs to the methyltransferase superfamily. RsmH family.

The protein localises to the cytoplasm. It catalyses the reaction cytidine(1402) in 16S rRNA + S-adenosyl-L-methionine = N(4)-methylcytidine(1402) in 16S rRNA + S-adenosyl-L-homocysteine + H(+). Functionally, specifically methylates the N4 position of cytidine in position 1402 (C1402) of 16S rRNA. The protein is Ribosomal RNA small subunit methyltransferase H of Leifsonia xyli subsp. xyli (strain CTCB07).